The chain runs to 136 residues: Interleukin-13 (136 aa).

A signal peptide spans Met-1–Ala-18. N-linked (GlcNAc...) asparagine glycosylation is found at Asn-38, Asn-49, Asn-57, Asn-72, Asn-75, and Asn-131. 2 cysteine pairs are disulfide-bonded: Cys-48–Cys-76 and Cys-64–Cys-90.

The protein belongs to the IL-4/IL-13 family. In terms of assembly, interacts with IL13RA2.

It localises to the secreted. Functionally, cytokine that plays important roles in allergic inflammation and immune response to parasite infection. Synergizes with IL2 in regulating interferon-gamma synthesis. Stimulates B-cell proliferation, and activation of eosinophils, basophils, and mast cells. Plays an important role in controlling IL33 activity by modulating the production of transmembrane and soluble forms of interleukin-1 receptor-like 1/IL1RL1. Displays the capacity to antagonize Th1-driven proinflammatory immune response and downregulates synthesis of many proinflammatory cytokines including IL1, IL6, IL10, IL12 and TNF-alpha through a mechanism that partially involves suppression of NF-kappa-B. Also functions on nonhematopoietic cells, including endothelial cells where it induces vascular cell adhesion protein 1/VCAM1, which is important in the recruitment of eosinophils. Exerts its biological effects through its receptors which comprises the IL4R chain and the IL13RA1 chain, to activate JAK1 and TYK2, leading to the activation of STAT6. Aside from IL13RA1, another receptor IL13RA2 acts as a high affinity decoy for IL13 and mediates internalization and depletion of extracellular IL13. The chain is Interleukin-13 (IL13) from Camelus bactrianus (Bactrian camel).